The sequence spans 636 residues: DNA mismatch repair protein MutL (636 aa).

Residues 362-393 (RKTPEVHEEAEKPEFLVKQEAKNSEEPKNETE) form a disordered region. The segment covering 363–393 (KTPEVHEEAEKPEFLVKQEAKNSEEPKNETE) has biased composition (basic and acidic residues).

This sequence belongs to the DNA mismatch repair MutL/HexB family.

This protein is involved in the repair of mismatches in DNA. It is required for dam-dependent methyl-directed DNA mismatch repair. May act as a 'molecular matchmaker', a protein that promotes the formation of a stable complex between two or more DNA-binding proteins in an ATP-dependent manner without itself being part of a final effector complex. This chain is DNA mismatch repair protein MutL, found in Lactobacillus helveticus (strain DPC 4571).